Reading from the N-terminus, the 251-residue chain is uncharacterized protein (251 aa).

Belongs to the methyltransferase superfamily.

Its subcellular location is the cytoplasm. It localises to the nucleus. Its function is as follows. Probable methyltransferase. This is an uncharacterized protein from Schizosaccharomyces pombe (strain 972 / ATCC 24843) (Fission yeast).